Reading from the N-terminus, the 175-residue chain is Large ribosomal subunit protein uL10 (175 aa).

The protein belongs to the universal ribosomal protein uL10 family. As to quaternary structure, part of the ribosomal stalk of the 50S ribosomal subunit. The N-terminus interacts with L11 and the large rRNA to form the base of the stalk. The C-terminus forms an elongated spine to which L12 dimers bind in a sequential fashion forming a multimeric L10(L12)X complex.

Forms part of the ribosomal stalk, playing a central role in the interaction of the ribosome with GTP-bound translation factors. This Prochlorococcus marinus (strain MIT 9215) protein is Large ribosomal subunit protein uL10.